The chain runs to 89 residues: Large ribosomal subunit protein bL31B (89 aa).

The protein belongs to the bacterial ribosomal protein bL31 family. Type B subfamily. As to quaternary structure, part of the 50S ribosomal subunit.

This Aeromonas hydrophila subsp. hydrophila (strain ATCC 7966 / DSM 30187 / BCRC 13018 / CCUG 14551 / JCM 1027 / KCTC 2358 / NCIMB 9240 / NCTC 8049) protein is Large ribosomal subunit protein bL31B.